Consider the following 380-residue polypeptide: UDP-N-acetylglucosamine 2-epimerase (380 aa).

This sequence belongs to the UDP-N-acetylglucosamine 2-epimerase family.

It localises to the cytoplasm. It catalyses the reaction UDP-N-acetyl-alpha-D-glucosamine = UDP-N-acetyl-alpha-D-mannosamine. The protein operates within cell wall biogenesis; poly(glycerol phosphate) teichoic acid biosynthesis. Catalyzes the conversion of UDP-N-acetylglucosamine into UDP-N-acetylmannosamine, a precursor of the teichoic acid linkage unit. This Bacillus subtilis (strain 168) protein is UDP-N-acetylglucosamine 2-epimerase (mnaA).